We begin with the raw amino-acid sequence, 178 residues long: Large ribosomal subunit protein uL6 (178 aa).

This sequence belongs to the universal ribosomal protein uL6 family. In terms of assembly, part of the 50S ribosomal subunit.

In terms of biological role, this protein binds to the 23S rRNA, and is important in its secondary structure. It is located near the subunit interface in the base of the L7/L12 stalk, and near the tRNA binding site of the peptidyltransferase center. The protein is Large ribosomal subunit protein uL6 of Nitrosococcus oceani (strain ATCC 19707 / BCRC 17464 / JCM 30415 / NCIMB 11848 / C-107).